The following is a 1460-amino-acid chain: Venom prothrombin activator pseutarin-C non-catalytic subunit (1460 aa).

The signal sequence occupies residues 1-30; the sequence is MGRYSVSPVPKCLLLMFLGWSGLKYYQVNA. In terms of domain architecture, Plastocyanin-like 1 spans 32 to 196; it reads QLREYHIAAQ…SGLIGALLIC (165 aa). 2 F5/8 type A domains span residues 32–330 and 351–685; these read QLRE…LNIK and KNWE…FLDA. 4 residues coordinate Ca(2+): Lys124, Glu139, Asp142, and Asp143. A glycan (N-linked (GlcNAc...) asparagine) is linked at Asn156. The cysteines at positions 170 and 196 are disulfide-linked. Asn204 and Asn242 each carry an N-linked (GlcNAc...) asparagine glycan. 3 Plastocyanin-like domains span residues 206–330, 351–529, and 539–685; these read SQKF…LNIK, KNWE…LLVC, and VQNK…FLDA. A disulfide bond links Cys251 and Cys332. Residues Asn406 and Asn471 are each glycosylated (N-linked (GlcNAc...) asparagine). Residues Cys503 and Cys529 are joined by a disulfide bond. N-linked (GlcNAc...) asparagine glycosylation occurs at Asn557. Disulfide bonds link Cys672–Cys1032, Cys966–Cys992, Cys1147–Cys1298, and Cys1303–Cys1457. A b region spans residues 693 to 818; the sequence is GNEEEEEDDG…PDDIAGRYLR (126 aa). The propeptide at 773 to 818 is activation peptide (connecting region); that stretch reads SFKGSVAEEELKHTALALEEDAHASDPRIDSNSARNPDDIAGRYLR. 2 consecutive Plastocyanin-like domains span residues 824–992 and 1001–1143; these read NKRR…ILIC and NRTI…FTVI. Residues 824-1143 form the F5/8 type A 3 domain; it reads NKRRYYIAAE…RGMQALFTVI (320 aa). Lys920, Phe935, Asp938, and Asp939 together coordinate Ca(2+). An N-linked (GlcNAc...) asparagine glycan is attached at Asn944. N-linked (GlcNAc...) asparagine glycosylation is found at Asn1001 and Asn1180. 2 F5/8 type C domains span residues 1147-1298 and 1303-1457; these read CKLP…LLGC and CSVP…LFGC.

It belongs to the multicopper oxidase family. Heterodimer of a light and a heavy chains; non-disulfide-linked. The interaction between the two chains is calcium-dependent. Found in its active form associated with pseutarin-C catalytic subunit (AC Q56VR3). In physiological conditions, blood coagulation factor V and factor Va are inactivated by activated protein C (APC) through proteolytic degradation of the heavy chain. However, pseutarin-C non-catalytic subunit (factor V-like protein) retains its full activity even at high concentration of APC. This has two explanations: this protein has only one of the three cleavage sites present in factor V that are targeted by the APC for inactivation, and the binding with the catalytic subunit protect the cleavage site from inactivation. As to expression, expressed by the venom gland.

It is found in the secreted. In terms of biological role, snake prothrombin activator that attacks the hemostatic system of prey. This non-catalytic subunit is functionally similar to blood coagulation factor V. It serves as a critical cofactor for the prothrombinase activity of the catalytic subunit, which is similar to the blood coagulation factor X. The complex converts prothrombin to thrombin by sequential cleavage at two positions, Arg-320 followed by Arg-271. Cleavage at Arg-320 produces an active intermediate known as meizothrombin. Meizothrombin is the 'second' substrate for prothrombinase, and it docks in an altered manner to present the second cleavage site (271). Cleavage at Arg-271 releases active thrombin from its pro-fragment. This order of events is reversed if the protease component of prothrombinase is used on its own, suggesting that the 271 site is inherently more accessible to proteolysis. The complex converts prothrombin to thrombin in presence but also in the absence of membrane. The sequence is that of Venom prothrombin activator pseutarin-C non-catalytic subunit from Pseudonaja textilis (Eastern brown snake).